Reading from the N-terminus, the 356-residue chain is UDP-3-O-acylglucosamine N-acyltransferase (356 aa).

His242 functions as the Proton acceptor in the catalytic mechanism.

The protein belongs to the transferase hexapeptide repeat family. LpxD subfamily. Homotrimer.

The catalysed reaction is a UDP-3-O-[(3R)-3-hydroxyacyl]-alpha-D-glucosamine + a (3R)-hydroxyacyl-[ACP] = a UDP-2-N,3-O-bis[(3R)-3-hydroxyacyl]-alpha-D-glucosamine + holo-[ACP] + H(+). It participates in bacterial outer membrane biogenesis; LPS lipid A biosynthesis. Catalyzes the N-acylation of UDP-3-O-acylglucosamine using 3-hydroxyacyl-ACP as the acyl donor. Is involved in the biosynthesis of lipid A, a phosphorylated glycolipid that anchors the lipopolysaccharide to the outer membrane of the cell. The chain is UDP-3-O-acylglucosamine N-acyltransferase from Acinetobacter baylyi (strain ATCC 33305 / BD413 / ADP1).